Consider the following 110-residue polypeptide: Large ribosomal subunit protein uL22 (110 aa).

Positions 84–95 (ARGTASKIRKPT) are enriched in basic residues. The interval 84-110 (ARGTASKIRKPTSHVMVEVSKPEKKEA) is disordered.

The protein belongs to the universal ribosomal protein uL22 family. In terms of assembly, part of the 50S ribosomal subunit.

In terms of biological role, this protein binds specifically to 23S rRNA; its binding is stimulated by other ribosomal proteins, e.g. L4, L17, and L20. It is important during the early stages of 50S assembly. It makes multiple contacts with different domains of the 23S rRNA in the assembled 50S subunit and ribosome. Its function is as follows. The globular domain of the protein is located near the polypeptide exit tunnel on the outside of the subunit, while an extended beta-hairpin is found that lines the wall of the exit tunnel in the center of the 70S ribosome. This is Large ribosomal subunit protein uL22 from Campylobacter concisus (strain 13826).